The sequence spans 587 residues: MHRYRSHTCGELRSSDVGTDVRLSGWLHNRRDLGGILFIDLRDHYGITQLVARPGTEAYEALDKLTKESTVRVDGKVVSRGADNINPDLPTGEVEVEVGEVELLGAAQPLPFTINTEDGVNEERRLEYRFLDLRRERMHRNIMLRTSVISSIRSKMVALGFNEMATPILTATSPEGARDFVVPSRLHAGRFYALPQAPQQFKQLLMISGFDRYFQIAPCFRDEDARADRSPGEFYQLDVEMSFVEQEDVFRPIEQLMTELFEEFGNGRHVTSPFPRIPFREAMLKYGSDKPDLRAQLELVDITDVFEGSEFKAFAGKHVRALPVPDVSGQPRRFFDQLGDYAVSQGAKGLAWVRVGEDGKLSGPIAKFLTEENVAELTKRLSLAPGHAVFFGAGEFDEVSKIMGAVRVEAAKRAGHFEENVFRFCWIVDFPMYEKDEETGKIDFSHNPFSMPQGGMDALENQDPLDILAWQYDIVCNGVELSSGAIRNHEPEIMLKAFEIAGYDAETVEREFAGMLRAFRFGAPPHGGIAPGVDRIVMLLADEPNIRETIAFPLNGNAQDLMMGAPTELDESRLRELHLTVRKPQPK.

Residue E175 coordinates L-aspartate. Residues 199–202 form an aspartate region; sequence QQFK. Positions 221 and 446 each coordinate L-aspartate. 221-223 contributes to the ATP binding site; that stretch reads RDE. E480 provides a ligand contact to ATP. R487 is an L-aspartate binding site. 532 to 535 provides a ligand contact to ATP; it reads GVDR.

The protein belongs to the class-II aminoacyl-tRNA synthetase family. Type 1 subfamily. Homodimer.

It is found in the cytoplasm. It catalyses the reaction tRNA(Asp) + L-aspartate + ATP = L-aspartyl-tRNA(Asp) + AMP + diphosphate. Its function is as follows. Catalyzes the attachment of L-aspartate to tRNA(Asp) in a two-step reaction: L-aspartate is first activated by ATP to form Asp-AMP and then transferred to the acceptor end of tRNA(Asp). This is Aspartate--tRNA ligase from Streptomyces coelicolor (strain ATCC BAA-471 / A3(2) / M145).